We begin with the raw amino-acid sequence, 125 residues long: 14 kDa phosphohistidine phosphatase (125 aa).

A2 carries the N-acetylalanine modification. Residue K21 coordinates substrate. Catalysis depends on H53, which acts as the Proton acceptor. S94–A96 contacts substrate.

It belongs to the janus family. As to quaternary structure, monomer. Expressed abundantly in heart and skeletal muscle.

It localises to the cytoplasm. It catalyses the reaction N(pros)-phospho-L-histidyl-[protein] + H2O = L-histidyl-[protein] + phosphate. It carries out the reaction N(tele)-phospho-L-histidyl-[protein] + H2O = L-histidyl-[protein] + phosphate. Exhibits phosphohistidine phosphatase activity. This is 14 kDa phosphohistidine phosphatase (PHPT1) from Homo sapiens (Human).